The following is a 368-amino-acid chain: uncharacterized protein (368 aa).

Residues 3–120 (KILLADDERI…QIISSLEEII (118 aa)) enclose the Response regulatory domain. Asp55 carries the 4-aspartylphosphate modification. Residues 259 to 361 (SKMIRLIADE…GLTPSEFRRK (103 aa)) form the HTH araC/xylS-type domain. DNA-binding regions (H-T-H motif) lie at residues 278–299 (WAAKDMLFMNPDYLGKLFKQET) and 327–351 (VSEIAEEIGFGDNPKYFSLVFKKYT).

Phosphorylated by YesM.

The protein localises to the cytoplasm. In terms of biological role, member of the two-component regulatory system YesM/YesN. This is an uncharacterized protein from Bacillus subtilis (strain 168).